The primary structure comprises 384 residues: S-adenosylmethionine synthase (384 aa).

Residue His15 participates in ATP binding. Residue Asp17 coordinates Mg(2+). Glu43 lines the K(+) pocket. Positions 56 and 99 each coordinate L-methionine. Residues 99–109 (QSPDINQGVDR) form a flexible loop region. ATP contacts are provided by residues 164-166 (DAK), 231-232 (RF), Asp240, 246-247 (RK), Ala263, and Lys267. Asp240 is a binding site for L-methionine. Lys271 contributes to the L-methionine binding site.

This sequence belongs to the AdoMet synthase family. In terms of assembly, homotetramer; dimer of dimers. Requires Mg(2+) as cofactor. K(+) is required as a cofactor.

It localises to the cytoplasm. The enzyme catalyses L-methionine + ATP + H2O = S-adenosyl-L-methionine + phosphate + diphosphate. It functions in the pathway amino-acid biosynthesis; S-adenosyl-L-methionine biosynthesis; S-adenosyl-L-methionine from L-methionine: step 1/1. Catalyzes the formation of S-adenosylmethionine (AdoMet) from methionine and ATP. The overall synthetic reaction is composed of two sequential steps, AdoMet formation and the subsequent tripolyphosphate hydrolysis which occurs prior to release of AdoMet from the enzyme. The polypeptide is S-adenosylmethionine synthase (Shewanella halifaxensis (strain HAW-EB4)).